The sequence spans 388 residues: Succinate--CoA ligase [ADP-forming] subunit beta (388 aa).

In terms of domain architecture, ATP-grasp spans Lys-9–Ala-244. ATP contacts are provided by residues Lys-46, Gly-53–Gly-55, Glu-99, Ala-102, and Glu-107. The Mg(2+) site is built by Asn-199 and Asp-213. Substrate contacts are provided by residues Asn-264 and Gly-321 to Val-323.

Belongs to the succinate/malate CoA ligase beta subunit family. Heterotetramer of two alpha and two beta subunits. The cofactor is Mg(2+).

The catalysed reaction is succinate + ATP + CoA = succinyl-CoA + ADP + phosphate. It carries out the reaction GTP + succinate + CoA = succinyl-CoA + GDP + phosphate. It participates in carbohydrate metabolism; tricarboxylic acid cycle; succinate from succinyl-CoA (ligase route): step 1/1. Functionally, succinyl-CoA synthetase functions in the citric acid cycle (TCA), coupling the hydrolysis of succinyl-CoA to the synthesis of either ATP or GTP and thus represents the only step of substrate-level phosphorylation in the TCA. The beta subunit provides nucleotide specificity of the enzyme and binds the substrate succinate, while the binding sites for coenzyme A and phosphate are found in the alpha subunit. In Mannheimia succiniciproducens (strain KCTC 0769BP / MBEL55E), this protein is Succinate--CoA ligase [ADP-forming] subunit beta.